The primary structure comprises 795 residues: Phenylalanine--tRNA ligase beta subunit (795 aa).

A tRNA-binding domain is found at 39 to 149; sequence SGEFSGVVVA…ADAPIGVDIR (111 aa). The B5 domain maps to 402-477; that stretch reads PKQPIIRLRR…RIYGYNRIPN (76 aa). Residues aspartate 455, aspartate 461, glutamate 464, and glutamate 465 each coordinate Mg(2+). Residues 701–794 enclose the FDX-ACB domain; that stretch reads SKFPANNRDI…LAQRFQASLR (94 aa).

Belongs to the phenylalanyl-tRNA synthetase beta subunit family. Type 1 subfamily. In terms of assembly, tetramer of two alpha and two beta subunits. Requires Mg(2+) as cofactor.

It localises to the cytoplasm. It carries out the reaction tRNA(Phe) + L-phenylalanine + ATP = L-phenylalanyl-tRNA(Phe) + AMP + diphosphate + H(+). The chain is Phenylalanine--tRNA ligase beta subunit from Haemophilus ducreyi (strain 35000HP / ATCC 700724).